The chain runs to 458 residues: Cysteine--tRNA ligase (458 aa).

Zn(2+) is bound at residue Cys-29. The short motif at Pro-31–Asn-41 is the 'HIGH' region element. The Zn(2+) site is built by Cys-211, His-236, and Glu-240. Positions Lys-269–Ser-273 match the 'KMSKS' region motif. Lys-272 contacts ATP.

This sequence belongs to the class-I aminoacyl-tRNA synthetase family. In terms of assembly, monomer. The cofactor is Zn(2+).

The protein resides in the cytoplasm. The catalysed reaction is tRNA(Cys) + L-cysteine + ATP = L-cysteinyl-tRNA(Cys) + AMP + diphosphate. The protein is Cysteine--tRNA ligase of Beijerinckia indica subsp. indica (strain ATCC 9039 / DSM 1715 / NCIMB 8712).